The sequence spans 447 residues: Na(+)-translocating NADH-quinone reductase subunit A (447 aa).

Belongs to the NqrA family. In terms of assembly, composed of six subunits; NqrA, NqrB, NqrC, NqrD, NqrE and NqrF.

The enzyme catalyses a ubiquinone + n Na(+)(in) + NADH + H(+) = a ubiquinol + n Na(+)(out) + NAD(+). In terms of biological role, NQR complex catalyzes the reduction of ubiquinone-1 to ubiquinol by two successive reactions, coupled with the transport of Na(+) ions from the cytoplasm to the periplasm. NqrA to NqrE are probably involved in the second step, the conversion of ubisemiquinone to ubiquinol. This Cellvibrio japonicus (strain Ueda107) (Pseudomonas fluorescens subsp. cellulosa) protein is Na(+)-translocating NADH-quinone reductase subunit A.